A 205-amino-acid chain; its full sequence is Ephrin-A1 (205 aa).

The N-terminal stretch at 1–18 (MEFFWASLLGLCCSLAAA) is a signal peptide. Positions 19–151 (NRHTVFWNSS…RLKVMIAGKI (133 aa)) constitute an Ephrin RBD domain. The N-linked (GlcNAc...) asparagine glycan is linked to Asn-26. Disulfide bonds link Cys-51–Cys-92 and Cys-80–Cys-140. The GPI-anchor amidated serine moiety is linked to residue Ser-182. A propeptide spans 183 to 205 (AAPRLFPLAWAVLLLPFLLLQIP) (removed in mature form).

Belongs to the ephrin family. In terms of assembly, monomer. Homodimer. Forms heterodimers with EPHA2. Binds to the receptor tyrosine kinases EPHA2, EPHA3, EPHA4, EPHA5, EPHA6 and EPHA7. Also binds with low affinity to EPHA1. Post-translationally, undergoes proteolysis by a metalloprotease to give rise to a soluble monomeric form. In terms of processing, N-Glycosylation is required for binding to EPHA2 receptor and inducing its internalization.

It localises to the cell membrane. Its subcellular location is the secreted. In terms of biological role, cell surface GPI-bound ligand for Eph receptors, a family of receptor tyrosine kinases which are crucial for migration, repulsion and adhesion during neuronal, vascular and epithelial development. Binds promiscuously Eph receptors residing on adjacent cells, leading to contact-dependent bidirectional signaling into neighboring cells. Plays an important role in angiogenesis and tumor neovascularization. The recruitment of VAV2, VAV3 and PI3-kinase p85 subunit by phosphorylated EPHA2 is critical for EFNA1-induced RAC1 GTPase activation and vascular endothelial cell migration and assembly. Exerts anti-oncogenic effects in tumor cells through activation and down-regulation of EPHA2. Activates EPHA2 by inducing tyrosine phosphorylation which leads to its internalization and degradation. Acts as a negative regulator in the tumorigenesis of gliomas by down-regulating EPHA2 and FAK. Can evoke collapse of embryonic neuronal growth cone and regulates dendritic spine morphogenesis. This Bos taurus (Bovine) protein is Ephrin-A1 (EFNA1).